The chain runs to 637 residues: 1-deoxy-D-xylulose-5-phosphate synthase (637 aa).

Thiamine diphosphate-binding positions include H76 and 117–119; that span reads GHS. Mg(2+) is bound at residue D148. Thiamine diphosphate contacts are provided by residues 149-150, N177, Y294, and E381; that span reads GA. N177 lines the Mg(2+) pocket.

The protein belongs to the transketolase family. DXPS subfamily. In terms of assembly, homodimer. It depends on Mg(2+) as a cofactor. Requires thiamine diphosphate as cofactor.

It carries out the reaction D-glyceraldehyde 3-phosphate + pyruvate + H(+) = 1-deoxy-D-xylulose 5-phosphate + CO2. The protein operates within metabolic intermediate biosynthesis; 1-deoxy-D-xylulose 5-phosphate biosynthesis; 1-deoxy-D-xylulose 5-phosphate from D-glyceraldehyde 3-phosphate and pyruvate: step 1/1. Functionally, catalyzes the acyloin condensation reaction between C atoms 2 and 3 of pyruvate and glyceraldehyde 3-phosphate to yield 1-deoxy-D-xylulose-5-phosphate (DXP). This chain is 1-deoxy-D-xylulose-5-phosphate synthase, found in Neisseria meningitidis serogroup A / serotype 4A (strain DSM 15465 / Z2491).